We begin with the raw amino-acid sequence, 211 residues long: ATP phosphoribosyltransferase (211 aa).

Belongs to the ATP phosphoribosyltransferase family. Short subfamily. Heteromultimer composed of HisG and HisZ subunits.

The protein localises to the cytoplasm. It catalyses the reaction 1-(5-phospho-beta-D-ribosyl)-ATP + diphosphate = 5-phospho-alpha-D-ribose 1-diphosphate + ATP. It participates in amino-acid biosynthesis; L-histidine biosynthesis; L-histidine from 5-phospho-alpha-D-ribose 1-diphosphate: step 1/9. Its function is as follows. Catalyzes the condensation of ATP and 5-phosphoribose 1-diphosphate to form N'-(5'-phosphoribosyl)-ATP (PR-ATP). Has a crucial role in the pathway because the rate of histidine biosynthesis seems to be controlled primarily by regulation of HisG enzymatic activity. The protein is ATP phosphoribosyltransferase of Lacticaseibacillus paracasei (strain ATCC 334 / BCRC 17002 / CCUG 31169 / CIP 107868 / KCTC 3260 / NRRL B-441) (Lactobacillus paracasei).